The chain runs to 106 residues: Large ribosomal subunit protein uL24 (106 aa).

This sequence belongs to the universal ribosomal protein uL24 family. As to quaternary structure, part of the 50S ribosomal subunit.

In terms of biological role, one of two assembly initiator proteins, it binds directly to the 5'-end of the 23S rRNA, where it nucleates assembly of the 50S subunit. One of the proteins that surrounds the polypeptide exit tunnel on the outside of the subunit. The chain is Large ribosomal subunit protein uL24 from Thermosipho africanus (strain TCF52B).